A 129-amino-acid polypeptide reads, in one-letter code: Translation initiation factor 5A (129 aa).

The residue at position 36 (K36) is a Hypusine.

This sequence belongs to the eIF-5A family.

Its subcellular location is the cytoplasm. Its function is as follows. Functions by promoting the formation of the first peptide bond. The sequence is that of Translation initiation factor 5A (eif5a) from Thermoplasma acidophilum (strain ATCC 25905 / DSM 1728 / JCM 9062 / NBRC 15155 / AMRC-C165).